The chain runs to 386 residues: Flap endonuclease 1 (386 aa).

The segment at 1–104 (MGILGLSKLI…GELAKRAERR (104 aa)) is N-domain. Aspartate 34 provides a ligand contact to Mg(2+). 2 residues coordinate DNA: arginine 47 and arginine 70. Mg(2+) contacts are provided by aspartate 86, glutamate 158, glutamate 160, aspartate 179, and aspartate 181. Residues 122–253 (EIEKFNRRLV…KRAIELINNY (132 aa)) are I-domain. Glutamate 158 serves as a coordination point for DNA. DNA-binding residues include glycine 231 and aspartate 233. Aspartate 233 is a binding site for Mg(2+). The segment at 336-344 (TQVRLDSFF) is interaction with PCNA. The segment at 351-386 (PNAVHAAKRKAEEAKKSANNKKAKTSGGAARGRRPK) is disordered.

This sequence belongs to the XPG/RAD2 endonuclease family. FEN1 subfamily. In terms of assembly, interacts with PCNA. Three molecules of FEN1 bind to one PCNA trimer with each molecule binding to one PCNA monomer. PCNA stimulates the nuclease activity without altering cleavage specificity. The cofactor is Mg(2+). In terms of processing, phosphorylated. Phosphorylation upon DNA damage induces relocalization to the nuclear plasma.

It is found in the nucleus. The protein localises to the nucleolus. It localises to the nucleoplasm. The protein resides in the mitochondrion. In terms of biological role, structure-specific nuclease with 5'-flap endonuclease and 5'-3' exonuclease activities involved in DNA replication and repair. During DNA replication, cleaves the 5'-overhanging flap structure that is generated by displacement synthesis when DNA polymerase encounters the 5'-end of a downstream Okazaki fragment. It enters the flap from the 5'-end and then tracks to cleave the flap base, leaving a nick for ligation. Also involved in the long patch base excision repair (LP-BER) pathway, by cleaving within the apurinic/apyrimidinic (AP) site-terminated flap. Acts as a genome stabilization factor that prevents flaps from equilibrating into structures that lead to duplications and deletions. Also possesses 5'-3' exonuclease activity on nicked or gapped double-stranded DNA, and exhibits RNase H activity. Also involved in replication and repair of rDNA and in repairing mitochondrial DNA. This Drosophila persimilis (Fruit fly) protein is Flap endonuclease 1.